The primary structure comprises 255 residues: Protein YIPF7 (255 aa).

Over 1–124 (MSNLGQFDSD…ADGSIMNETD (124 aa)) the chain is Cytoplasmic. The helical transmembrane segment at 125–145 (LTGPILFCMALGATLLLAGKV) threads the bilayer. Gln-146 is a topological domain (lumenal). The chain crosses the membrane as a helical span at residues 147-167 (FGYVYGMSAIGCLGIHALLNL). At 168 to 180 (MSSSGVSYGCVAS) the chain is on the cytoplasmic side. A helical membrane pass occupies residues 181–201 (VLGYCLLPMVILSSCAIFFSL). At 202-204 (QGT) the chain is on the lumenal side. Residues 205–225 (FGTVSALVIIGWCSLSASKIF) traverse the membrane as a helical segment. Topologically, residues 226–234 (TSALAMEGQ) are cytoplasmic. Residues 235 to 255 (QLLIAYPCALLYGLFALVTVF) traverse the membrane as a helical segment.

The protein belongs to the YIP1 family.

It localises to the endoplasmic reticulum membrane. Its subcellular location is the golgi apparatus. It is found in the cis-Golgi network membrane. The protein resides in the trans-Golgi network membrane. This chain is Protein YIPF7 (YIPF7), found in Bos taurus (Bovine).